The primary structure comprises 399 residues: O-antigen polymerase (399 aa).

The next 10 helical transmembrane spans lie at 4–24 (FPPG…LVLV), 37–57 (LVFT…LTIF), 64–84 (AIMG…LVIL), 97–117 (IVCY…IDVL), 151–171 (GGFS…LLCM), 185–205 (IISF…AILV), 222–242 (FCGI…TNIF), 309–329 (FFWI…IYLA), 353–373 (LYFL…APSS), and 374–394 (STFS…KLTN).

The protein resides in the cell inner membrane. The catalysed reaction is n lipid-linked O-antigen repeat units = a lipid-linked O antigen + (n-1) polyisoprenyl diphosphate.. It functions in the pathway bacterial outer membrane biogenesis; LPS O-antigen biosynthesis. Functionally, polymerase involved in the biosynthesis of the lipopolysaccharide (LPS). Catalyzes the polymerization of the O-antigen repeat units on the periplasmic face of the inner membrane, leading to the formation of the lipid-linked O-antigen molecule. This chain is O-antigen polymerase, found in Salmonella muenchen.